Consider the following 560-residue polypeptide: NADH-quinone oxidoreductase subunit C/D (560 aa).

Positions 2-157 are NADH dehydrogenase I subunit C; it reads NKLENLKQLL…NNQQACTNSL (156 aa). Residues 175–560 form an NADH dehydrogenase I subunit D region; it reads KYLPLNIGPS…MNLIAGELDR (386 aa).

This sequence in the N-terminal section; belongs to the complex I 30 kDa subunit family. It in the C-terminal section; belongs to the complex I 49 kDa subunit family. NDH-1 is composed of 13 different subunits. Subunits NuoB, CD, E, F, and G constitute the peripheral sector of the complex.

It is found in the cytoplasm. It localises to the cell inner membrane. The enzyme catalyses a quinone + NADH + 5 H(+)(in) = a quinol + NAD(+) + 4 H(+)(out). NDH-1 shuttles electrons from NADH, via FMN and iron-sulfur (Fe-S) centers, to quinones in the respiratory chain. The immediate electron acceptor for the enzyme in this species is believed to be ubiquinone. Couples the redox reaction to proton translocation (for every two electrons transferred, four hydrogen ions are translocated across the cytoplasmic membrane), and thus conserves the redox energy in a proton gradient. This Bdellovibrio bacteriovorus (strain ATCC 15356 / DSM 50701 / NCIMB 9529 / HD100) protein is NADH-quinone oxidoreductase subunit C/D.